The primary structure comprises 500 residues: Probable cytosol aminopeptidase (500 aa).

Positions 265 and 270 each coordinate Mn(2+). Lys277 is a catalytic residue. Mn(2+) contacts are provided by Asp288, Asp347, and Glu349. Arg351 is an active-site residue.

It belongs to the peptidase M17 family. Requires Mn(2+) as cofactor.

The protein resides in the cytoplasm. It carries out the reaction Release of an N-terminal amino acid, Xaa-|-Yaa-, in which Xaa is preferably Leu, but may be other amino acids including Pro although not Arg or Lys, and Yaa may be Pro. Amino acid amides and methyl esters are also readily hydrolyzed, but rates on arylamides are exceedingly low.. The enzyme catalyses Release of an N-terminal amino acid, preferentially leucine, but not glutamic or aspartic acids.. Presumably involved in the processing and regular turnover of intracellular proteins. Catalyzes the removal of unsubstituted N-terminal amino acids from various peptides. This Rickettsia felis (strain ATCC VR-1525 / URRWXCal2) (Rickettsia azadi) protein is Probable cytosol aminopeptidase.